The sequence spans 276 residues: Secretagogin (276 aa).

EF-hand domains are found at residues 12–47 (LDAAGFWQVWQRFDVEEKGYIEEKELDAFFYHMLTK), 71–93 (DVSKDGCIQMKELAGMFLSEDEN), 105–140 (DSSVEFMRIWRKYDADSSGFISAAELCNFLRDLFLH), 149–184 (KLEEYTGTMMKIFDKNKDGRLDLNDLARILALQENF), 197–232 (ERKRDFEKIFAHYDVSKTGALEGPEVDGFVKDMMEL), and 240–276 (VDLDKFREILLRHCDVNKDGKIQKSELALCLGLKINP). Ca(2+) contacts are provided by Asp71, Ser73, Asp75, Cys77, Glu82, Asp118, Asp120, Ser122, Glu129, Asp162, Asn164, Asp166, Arg168, Asp173, Asp210, Ser212, Thr214, Glu221, Asp254, Asn256, Asp258, Lys260, and Glu265.

Its subcellular location is the cytoplasm. It is found in the secreted. The protein resides in the cytoplasmic vesicle. The protein localises to the secretory vesicle membrane. The protein is Secretagogin (SCGN) of Bos taurus (Bovine).